The sequence spans 36 residues: Cytochrome b6-f complex subunit 5 (36 aa).

Residues 5–25 form a helical membrane-spanning segment; sequence LLAGIVLGLVPVTLAGLFVAA.

Belongs to the PetG family. In terms of assembly, the 4 large subunits of the cytochrome b6-f complex are cytochrome b6, subunit IV (17 kDa polypeptide, PetD), cytochrome f and the Rieske protein, while the 4 small subunits are PetG, PetL, PetM and PetN. The complex functions as a dimer.

The protein resides in the cellular thylakoid membrane. Component of the cytochrome b6-f complex, which mediates electron transfer between photosystem II (PSII) and photosystem I (PSI), cyclic electron flow around PSI, and state transitions. PetG is required for either the stability or assembly of the cytochrome b6-f complex. This Acaryochloris marina (strain MBIC 11017) protein is Cytochrome b6-f complex subunit 5.